The primary structure comprises 446 residues: Probable 1,4-beta-D-glucan cellobiohydrolase A (446 aa).

The signal sequence occupies residues 1 to 17 (MYQRALLFSALLSVSRA). N81 carries an N-linked (GlcNAc...) asparagine glycan. The active-site Nucleophile is E226. The active-site Proton donor is the E231. N-linked (GlcNAc...) asparagine glycans are attached at residues N284 and N333. Positions 399-420 (TDADPSQPGVARGTCEQGAGDP) are disordered.

It belongs to the glycosyl hydrolase 7 (cellulase C) family.

The protein localises to the secreted. The catalysed reaction is Hydrolysis of (1-&gt;4)-beta-D-glucosidic linkages in cellulose and cellotetraose, releasing cellobiose from the non-reducing ends of the chains.. Its function is as follows. The biological conversion of cellulose to glucose generally requires three types of hydrolytic enzymes: (1) Endoglucanases which cut internal beta-1,4-glucosidic bonds; (2) Exocellobiohydrolases that cut the disaccharide cellobiose from the non-reducing end of the cellulose polymer chain; (3) Beta-1,4-glucosidases which hydrolyze the cellobiose and other short cello-oligosaccharides to glucose. The protein is Probable 1,4-beta-D-glucan cellobiohydrolase A (cbhA) of Emericella nidulans (strain FGSC A4 / ATCC 38163 / CBS 112.46 / NRRL 194 / M139) (Aspergillus nidulans).